The sequence spans 598 residues: Arylsulfate sulfotransferase AssT (598 aa).

The N-terminal stretch at 1 to 27 (MFDKYRKTLVAGTVAITLGLSASGVMA) is a signal peptide. Residues H279 and H383 each contribute to the 4-methylumbelliferone site. Cysteines 445 and 451 form a disulfide. Position 463 (H463) interacts with 4-methylumbelliferone. Catalysis depends on H463, which acts as the Nucleophile; sulfurylated histidine covalent intermediate.

Belongs to the aryl sulfotransferase family. As to quaternary structure, homodimer. In terms of processing, the disulfide bond is crucial for enzyme activity.

It localises to the periplasm. It catalyses the reaction an aryl sulfate + a phenol = an aryl sulfate + a phenol. It carries out the reaction 4-methylumbelliferone sulfate + phenol = phenyl sulfate + 4-methylumbelliferone. Catalyzes the transfer of a sulfate group from a phenyl sulfate ester to other phenolic compounds. In vitro, is able to use 4-methylumbelliferyl sulfate and p-nitrophenyl sulfate (PNS) as donor substrates with phenol as the acceptor substrate. Cannot use 3'-phosphoadenosine-5'-phophosulfate (PAPS), the donor substrate of mammalian sulfotransferase. The chain is Arylsulfate sulfotransferase AssT from Escherichia coli O6:H1 (strain CFT073 / ATCC 700928 / UPEC).